An 84-amino-acid chain; its full sequence is Xenoxin-1 (84 aa).

Positions 1-18 (MRYAIVFFLVCVITLGEA) are cleaved as a signal peptide. Cystine bridges form between Cys21-Cys42, Cys35-Cys55, Cys61-Cys76, and Cys77-Cys82.

Expressed by the skin dorsal glands.

The protein resides in the secreted. Its function is as follows. Lacks alpha-neurotoxic activity, has apparently no antibacterial activity, nor anti-coagulant potency. The sequence is that of Xenoxin-1 (xenoxin-1) from Xenopus laevis (African clawed frog).